The sequence spans 230 residues: Ureidoacrylate amidohydrolase RutB (230 aa).

Asp24 acts as the Proton acceptor in catalysis. Lys133 is a catalytic residue. Cys166 functions as the Nucleophile in the catalytic mechanism.

This sequence belongs to the isochorismatase family. RutB subfamily.

The catalysed reaction is (Z)-3-ureidoacrylate + H2O + H(+) = (Z)-3-aminoacrylate + NH4(+) + CO2. It catalyses the reaction (Z)-3-ureidoacrylate + H2O = (Z)-3-aminoacrylate + carbamate + H(+). It carries out the reaction (Z)-2-methylureidoacrylate + H2O + H(+) = (Z)-2-methylaminoacrylate + NH4(+) + CO2. Functionally, hydrolyzes ureidoacrylate to form aminoacrylate and carbamate. The carbamate hydrolyzes spontaneously, thereby releasing one of the nitrogen atoms of the pyrimidine ring as ammonia and one of its carbon atoms as CO2. This chain is Ureidoacrylate amidohydrolase RutB, found in Escherichia coli O103:H2 (strain 12009 / EHEC).